A 210-amino-acid chain; its full sequence is Ras-related protein RABC2a (210 aa).

20 to 27 is a binding site for GTP; sequence GDSGVGKS. An Effector region motif is present at residues 41 to 49; the sequence is LAPTIGVDF. Residues 67–71, 127–130, and 157–158 each bind GTP; these read DTAGQ, NKVD, and SA. Residues Cys208 and Cys209 are each lipidated (S-geranylgeranyl cysteine).

It belongs to the small GTPase superfamily. Rab family. In terms of assembly, interacts with XI-2/MYA2.

It localises to the cell membrane. The protein resides in the cytoplasm. Functionally, intracellular vesicle trafficking and protein transport. The protein is Ras-related protein RABC2a (RABC2A) of Arabidopsis thaliana (Mouse-ear cress).